The chain runs to 512 residues: Lysine--tRNA ligase (512 aa).

Mg(2+) is bound by residues Glu-408 and Glu-415.

The protein belongs to the class-II aminoacyl-tRNA synthetase family. In terms of assembly, homodimer. The cofactor is Mg(2+).

The protein localises to the cytoplasm. It catalyses the reaction tRNA(Lys) + L-lysine + ATP = L-lysyl-tRNA(Lys) + AMP + diphosphate. This Prochlorococcus marinus subsp. pastoris (strain CCMP1986 / NIES-2087 / MED4) protein is Lysine--tRNA ligase.